A 120-amino-acid polypeptide reads, in one-letter code: Large ribosomal subunit protein bL21 (120 aa).

It belongs to the bacterial ribosomal protein bL21 family. Part of the 50S ribosomal subunit. Contacts protein L20.

This protein binds to 23S rRNA in the presence of protein L20. This chain is Large ribosomal subunit protein bL21, found in Roseiflexus sp. (strain RS-1).